The chain runs to 649 residues: Acetyl-coenzyme A synthetase (649 aa).

Residues 191-194 (RGGR), Thr-312, and Asn-336 contribute to the CoA site. Residues 388-390 (GEP), 412-417 (DTWWQT), Asp-501, and Arg-516 contribute to the ATP site. Ser-524 is a CoA binding site. Position 527 (Arg-527) interacts with ATP. Mg(2+)-binding residues include Val-538, His-540, and Val-543. Arg-585 is a CoA binding site. Residue Lys-610 is modified to N6-acetyllysine.

This sequence belongs to the ATP-dependent AMP-binding enzyme family. Mg(2+) serves as cofactor. Post-translationally, acetylated. Deacetylation by the SIR2-homolog deacetylase activates the enzyme.

It catalyses the reaction acetate + ATP + CoA = acetyl-CoA + AMP + diphosphate. Its function is as follows. Catalyzes the conversion of acetate into acetyl-CoA (AcCoA), an essential intermediate at the junction of anabolic and catabolic pathways. AcsA undergoes a two-step reaction. In the first half reaction, AcsA combines acetate with ATP to form acetyl-adenylate (AcAMP) intermediate. In the second half reaction, it can then transfer the acetyl group from AcAMP to the sulfhydryl group of CoA, forming the product AcCoA. This is Acetyl-coenzyme A synthetase from Marinobacter nauticus (strain ATCC 700491 / DSM 11845 / VT8) (Marinobacter aquaeolei).